A 155-amino-acid chain; its full sequence is Small ribosomal subunit protein uS7c (155 aa).

Belongs to the universal ribosomal protein uS7 family. Part of the 30S ribosomal subunit.

It localises to the plastid. Its subcellular location is the chloroplast. One of the primary rRNA binding proteins, it binds directly to 16S rRNA where it nucleates assembly of the head domain of the 30S subunit. This chain is Small ribosomal subunit protein uS7c (rps7), found in Sagittaria latifolia (Broadleaf arrowhead).